A 254-amino-acid chain; its full sequence is Type II restriction enzyme HpaI (254 aa).

The catalysed reaction is Endonucleolytic cleavage of DNA to give specific double-stranded fragments with terminal 5'-phosphates.. Functionally, a P subtype restriction enzyme that recognizes the double-stranded sequence 5'-GTTAAC-3' and cleaves after T-3. The sequence is that of Type II restriction enzyme HpaI (hpaIR) from Haemophilus parainfluenzae.